Reading from the N-terminus, the 106-residue chain is Pyrimidine/purine nucleoside phosphorylase (106 aa).

This sequence belongs to the nucleoside phosphorylase PpnP family.

The catalysed reaction is a purine D-ribonucleoside + phosphate = a purine nucleobase + alpha-D-ribose 1-phosphate. The enzyme catalyses adenosine + phosphate = alpha-D-ribose 1-phosphate + adenine. It catalyses the reaction cytidine + phosphate = cytosine + alpha-D-ribose 1-phosphate. It carries out the reaction guanosine + phosphate = alpha-D-ribose 1-phosphate + guanine. The catalysed reaction is inosine + phosphate = alpha-D-ribose 1-phosphate + hypoxanthine. The enzyme catalyses thymidine + phosphate = 2-deoxy-alpha-D-ribose 1-phosphate + thymine. It catalyses the reaction uridine + phosphate = alpha-D-ribose 1-phosphate + uracil. It carries out the reaction xanthosine + phosphate = alpha-D-ribose 1-phosphate + xanthine. In terms of biological role, catalyzes the phosphorolysis of diverse nucleosides, yielding D-ribose 1-phosphate and the respective free bases. Can use uridine, adenosine, guanosine, cytidine, thymidine, inosine and xanthosine as substrates. Also catalyzes the reverse reactions. In Leptospira interrogans serogroup Icterohaemorrhagiae serovar copenhageni (strain Fiocruz L1-130), this protein is Pyrimidine/purine nucleoside phosphorylase.